The chain runs to 207 residues: Ribonuclease HII (207 aa).

The region spanning 12 to 201 is the RNase H type-2 domain; that stretch reads DLVAGVDEVG…VRAAWEVREG (190 aa). Aspartate 18, glutamate 19, and aspartate 110 together coordinate a divalent metal cation.

The protein belongs to the RNase HII family. Mn(2+) serves as cofactor. Requires Mg(2+) as cofactor.

The protein localises to the cytoplasm. The catalysed reaction is Endonucleolytic cleavage to 5'-phosphomonoester.. Functionally, endonuclease that specifically degrades the RNA of RNA-DNA hybrids. This is Ribonuclease HII from Pseudomonas putida (strain ATCC 700007 / DSM 6899 / JCM 31910 / BCRC 17059 / LMG 24140 / F1).